A 135-amino-acid chain; its full sequence is Large ribosomal subunit protein uL16c (135 aa).

It belongs to the universal ribosomal protein uL16 family. Part of the 50S ribosomal subunit.

It is found in the plastid. It localises to the chloroplast. The polypeptide is Large ribosomal subunit protein uL16c (Oenothera argillicola (Appalachian evening primrose)).